The following is a 194-amino-acid chain: Peptidyl-tRNA hydrolase (194 aa).

Position 16 (Tyr-16) interacts with tRNA. The active-site Proton acceptor is the His-21. Phe-67, Asn-69, and Asn-115 together coordinate tRNA.

This sequence belongs to the PTH family. In terms of assembly, monomer.

The protein localises to the cytoplasm. The enzyme catalyses an N-acyl-L-alpha-aminoacyl-tRNA + H2O = an N-acyl-L-amino acid + a tRNA + H(+). In terms of biological role, hydrolyzes ribosome-free peptidyl-tRNAs (with 1 or more amino acids incorporated), which drop off the ribosome during protein synthesis, or as a result of ribosome stalling. Its function is as follows. Catalyzes the release of premature peptidyl moieties from peptidyl-tRNA molecules trapped in stalled 50S ribosomal subunits, and thus maintains levels of free tRNAs and 50S ribosomes. The chain is Peptidyl-tRNA hydrolase from Salmonella dublin (strain CT_02021853).